The primary structure comprises 180 residues: Peroxisome assembly protein 22 (180 aa).

Residues 15–32 (LGIVGTAIAVLVTSYYIY) form a helical membrane-spanning segment.

The protein belongs to the peroxin-22 family.

The protein resides in the peroxisome membrane. Its function is as follows. Involved in peroxisome biogenesis. In Saccharomyces cerevisiae (strain ATCC 204508 / S288c) (Baker's yeast), this protein is Peroxisome assembly protein 22 (PEX22).